The primary structure comprises 180 residues: Small ribosomal subunit protein uS4 (180 aa).

One can recognise an S4 RNA-binding domain in the interval 103 to 165 (RRLQTIVYRK…KGSPFAKEGH (63 aa)).

Belongs to the universal ribosomal protein uS4 family. In terms of assembly, part of the 30S ribosomal subunit. Contacts protein S5. The interaction surface between S4 and S5 is involved in control of translational fidelity.

Its function is as follows. One of the primary rRNA binding proteins, it binds directly to 16S rRNA where it nucleates assembly of the body of the 30S subunit. Functionally, with S5 and S12 plays an important role in translational accuracy. This chain is Small ribosomal subunit protein uS4, found in Thermococcus kodakarensis (strain ATCC BAA-918 / JCM 12380 / KOD1) (Pyrococcus kodakaraensis (strain KOD1)).